The sequence spans 416 residues: S-adenosylmethionine synthase (416 aa).

His14 lines the ATP pocket. A Mg(2+)-binding site is contributed by Asp16. Glu42 contacts K(+). L-methionine is bound by residues Glu55 and Gln98. The interval 98–108 is flexible loop; that stretch reads QSPDIARGVDT. Residues 173–175, 249–250, Asp258, 264–265, Ala281, and Lys285 each bind ATP; these read DGK, KF, and RK. L-methionine is bound at residue Asp258. Lys289 contacts L-methionine.

This sequence belongs to the AdoMet synthase family. In terms of assembly, homotetramer; dimer of dimers. The cofactor is Mg(2+). K(+) is required as a cofactor.

The protein localises to the cytoplasm. The catalysed reaction is L-methionine + ATP + H2O = S-adenosyl-L-methionine + phosphate + diphosphate. It participates in amino-acid biosynthesis; S-adenosyl-L-methionine biosynthesis; S-adenosyl-L-methionine from L-methionine: step 1/1. Catalyzes the formation of S-adenosylmethionine (AdoMet) from methionine and ATP. The overall synthetic reaction is composed of two sequential steps, AdoMet formation and the subsequent tripolyphosphate hydrolysis which occurs prior to release of AdoMet from the enzyme. The sequence is that of S-adenosylmethionine synthase from Thermosynechococcus vestitus (strain NIES-2133 / IAM M-273 / BP-1).